The following is a 319-amino-acid chain: Acetyl-coenzyme A carboxylase carboxyl transferase subunit alpha (319 aa).

The region spanning 39–293 (RLQKKSNDLT…KAVLEKQLHE (255 aa)) is the CoA carboxyltransferase C-terminal domain.

The protein belongs to the AccA family. As to quaternary structure, acetyl-CoA carboxylase is a heterohexamer composed of biotin carboxyl carrier protein (AccB), biotin carboxylase (AccC) and two subunits each of ACCase subunit alpha (AccA) and ACCase subunit beta (AccD).

It localises to the cytoplasm. It catalyses the reaction N(6)-carboxybiotinyl-L-lysyl-[protein] + acetyl-CoA = N(6)-biotinyl-L-lysyl-[protein] + malonyl-CoA. Its pathway is lipid metabolism; malonyl-CoA biosynthesis; malonyl-CoA from acetyl-CoA: step 1/1. Functionally, component of the acetyl coenzyme A carboxylase (ACC) complex. First, biotin carboxylase catalyzes the carboxylation of biotin on its carrier protein (BCCP) and then the CO(2) group is transferred by the carboxyltransferase to acetyl-CoA to form malonyl-CoA. This chain is Acetyl-coenzyme A carboxylase carboxyl transferase subunit alpha, found in Neisseria meningitidis serogroup C (strain 053442).